Reading from the N-terminus, the 294-residue chain is MANITAQMVKELREKTGAGMMDCKKALVETEGDMEKAIDYLREKGIAKAAKKSDRVASEGMTHVISNEKHAVVLEVNAETDFVAKNDNFQQLVDALAKQILAVRPDSLEDALKTEMPNGQTVQDYITEAITKIGENISLRRFEVKEKADNSAFGEYIHMNGRIGVLTLLEGTTDTTVAKDVAMHIAAINPKYISREDVSTEEVEHEKEVLTQQALNEGKPANIVEKMVEGRLKKYLSEISLEDQPFVKNPDITVGDYVKQSGGKVVSFVRFEVGEGIEKKEDNFVEEVMSQVKK.

An involved in Mg(2+) ion dislocation from EF-Tu region spans residues 80 to 83 (TDFV).

Belongs to the EF-Ts family.

It is found in the cytoplasm. Associates with the EF-Tu.GDP complex and induces the exchange of GDP to GTP. It remains bound to the aminoacyl-tRNA.EF-Tu.GTP complex up to the GTP hydrolysis stage on the ribosome. The protein is Elongation factor Ts of Listeria monocytogenes serotype 4b (strain CLIP80459).